The primary structure comprises 202 residues: Small ribosomal subunit protein uS4c (202 aa).

Positions 90-148 (MRLDNVIFRLGMSSTIPGARQLVNHRHIMINDEMVDTPGYNCKPRDIITLKNISESRSG) constitute an S4 RNA-binding domain.

It belongs to the universal ribosomal protein uS4 family. In terms of assembly, part of the 30S ribosomal subunit. Contacts protein S5. The interaction surface between S4 and S5 is involved in control of translational fidelity.

The protein resides in the plastid. Its subcellular location is the chloroplast. One of the primary rRNA binding proteins, it binds directly to 16S rRNA where it nucleates assembly of the body of the 30S subunit. Its function is as follows. With S5 and S12 plays an important role in translational accuracy. In Haplomitrium hookeri (Hooker's flapwort), this protein is Small ribosomal subunit protein uS4c (rps4).